The sequence spans 335 residues: Terpene synthase 4 (335 aa).

The DDxx(x)D/E motif signature appears at 103–108 (DDYIFE). Residues 243–251 (NDLYSFNRE) carry the NDxxSxxxD/E motif motif.

It belongs to the terpene synthase family.

The enzyme catalyses (2E,6E)-farnesyl diphosphate + H2O = (6E)-nerolidol + diphosphate. Functionally, terpene synthase that converts its substrate farnesyl diphosphate (FPP) into the sesquiterpene (E)-nerolidol. This Dictyostelium discoideum (Social amoeba) protein is Terpene synthase 4.